The primary structure comprises 424 residues: Phosphomethylpyrimidine synthase 2 (424 aa).

Substrate contacts are provided by residues Asn65, Met94, Tyr123, His162, 184–186 (SRG), 225–228 (DGLR), and Glu264. Residue His268 participates in Zn(2+) binding. Tyr291 is a binding site for substrate. His332 contacts Zn(2+). Cys408, Cys411, and Cys415 together coordinate [4Fe-4S] cluster.

Belongs to the ThiC family. The cofactor is [4Fe-4S] cluster.

It catalyses the reaction 5-amino-1-(5-phospho-beta-D-ribosyl)imidazole + S-adenosyl-L-methionine = 4-amino-2-methyl-5-(phosphooxymethyl)pyrimidine + CO + 5'-deoxyadenosine + formate + L-methionine + 3 H(+). The protein operates within cofactor biosynthesis; thiamine diphosphate biosynthesis. Functionally, catalyzes the synthesis of the hydroxymethylpyrimidine phosphate (HMP-P) moiety of thiamine from aminoimidazole ribotide (AIR) in a radical S-adenosyl-L-methionine (SAM)-dependent reaction. The chain is Phosphomethylpyrimidine synthase 2 from Methanothermobacter thermautotrophicus (strain ATCC 29096 / DSM 1053 / JCM 10044 / NBRC 100330 / Delta H) (Methanobacterium thermoautotrophicum).